An 858-amino-acid polypeptide reads, in one-letter code: DNA replication licensing factor mcm4-A (858 aa).

The disordered stretch occupies residues 1–125; it reads MSSPTSTPSR…ARKVKQVDLH (125 aa). 2 stretches are compositionally biased toward polar residues: residues 54-68 and 79-94; these read SPSGDIQSPLFSSPA and LDLSSPLTYGTPSSRV. Residues 301-326 form a C4-type zinc finger; that stretch reads CQVCAFTTRVEIDRGRIAEPSVCKHC. In terms of domain architecture, MCM spans 453 to 662; that stretch reads IYERLAAALA…YDRRLAHHLV (210 aa). 8 residues coordinate ATP: Tyr-466, Arg-492, Lys-511, Ser-512, Asn-613, Arg-638, Arg-727, and Glu-730. An Arginine finger motif is present at residues 637-640; that stretch reads SRFD.

The protein belongs to the MCM family. In terms of assembly, component of the mcm2-7 complex (RLF-M). The complex forms a toroidal hexameric ring with the proposed subunit order mcm2-mcm6-mcm4-mcm7-mcm3-mcm5. The heterodimer of mmcm3/mcm5 interacts with mcm4, mmcm6, mcm7 and weakly with mcm2. Component of the CMG helicase complex, composed of the mcm2-7 complex, the GINS complex and cdc45. In terms of processing, hyperphosphorylated during mitosis in a mechanism requiring cdc2-cyclin B and other kinases. Undergoes dephosphorylation after exiting mitosis, existing in a partially phosphorylated state in the cytosolic interphase mcm complex which associates with the pre-replication complexes (pre-Rcs). Complete dephosphorylation inactivates the mcm complex, preventing its binding to chromatin. Becomes actively phosphorylated during S phase once the mcm complex is assembled on the chromatin. This chromatin-associated phosphorylation occurs during the activation of the pre-Rcs and is independent of cdks. Phosphorylated by the cdc7-dbf4b complex.

The protein resides in the nucleus. It is found in the chromosome. It catalyses the reaction ATP + H2O = ADP + phosphate + H(+). In terms of biological role, acts as a component of the MCM2-7 complex (MCM complex) which is the replicative helicase essential for 'once per cell cycle' DNA replication initiation and elongation in eukaryotic cells. Core component of CDC45-MCM-GINS (CMG) helicase, the molecular machine that unwinds template DNA during replication, and around which the replisome is built. The active ATPase sites in the MCM2-7 ring are formed through the interaction surfaces of two neighboring subunits such that a critical structure of a conserved arginine finger motif is provided in trans relative to the ATP-binding site of the Walker A box of the adjacent subunit. The six ATPase active sites, however, are likely to contribute differentially to the complex helicase activity. The sequence is that of DNA replication licensing factor mcm4-A (mcm4-a) from Xenopus laevis (African clawed frog).